A 468-amino-acid chain; its full sequence is Glutamate--tRNA ligase (468 aa).

The 'HIGH' region motif lies at P8 to G18. Positions 97, 99, 124, and 126 each coordinate Zn(2+). Positions K236–R240 match the 'KMSKS' region motif. Residue K239 participates in ATP binding.

This sequence belongs to the class-I aminoacyl-tRNA synthetase family. Glutamate--tRNA ligase type 1 subfamily. As to quaternary structure, monomer. It depends on Zn(2+) as a cofactor.

The protein localises to the cytoplasm. The catalysed reaction is tRNA(Glu) + L-glutamate + ATP = L-glutamyl-tRNA(Glu) + AMP + diphosphate. Its function is as follows. Catalyzes the attachment of glutamate to tRNA(Glu) in a two-step reaction: glutamate is first activated by ATP to form Glu-AMP and then transferred to the acceptor end of tRNA(Glu). The protein is Glutamate--tRNA ligase of Francisella tularensis subsp. tularensis (strain SCHU S4 / Schu 4).